An 88-amino-acid polypeptide reads, in one-letter code: Putative regulatory protein DvMF_1139 (88 aa).

The protein belongs to the RemA family.

This Nitratidesulfovibrio vulgaris (strain DSM 19637 / Miyazaki F) (Desulfovibrio vulgaris) protein is Putative regulatory protein DvMF_1139.